Here is a 73-residue protein sequence, read N- to C-terminus: UPF0235 protein LA_1736 (73 aa).

The protein belongs to the UPF0235 family.

The polypeptide is UPF0235 protein LA_1736 (Leptospira interrogans serogroup Icterohaemorrhagiae serovar Lai (strain 56601)).